Reading from the N-terminus, the 105-residue chain is Phosphoribosyl-ATP pyrophosphatase (105 aa).

The protein belongs to the PRA-PH family.

It is found in the cytoplasm. The enzyme catalyses 1-(5-phospho-beta-D-ribosyl)-ATP + H2O = 1-(5-phospho-beta-D-ribosyl)-5'-AMP + diphosphate + H(+). Its pathway is amino-acid biosynthesis; L-histidine biosynthesis; L-histidine from 5-phospho-alpha-D-ribose 1-diphosphate: step 2/9. The sequence is that of Phosphoribosyl-ATP pyrophosphatase from Vesicomyosocius okutanii subsp. Calyptogena okutanii (strain HA).